Consider the following 242-residue polypeptide: EF-hand domain-containing protein D2 (242 aa).

A disordered region spans residues 1 to 53 (MATDELASKLSRRLQMEGEGGGEAPEQPGLNGAAAAAAAAGAPDETAEALGSA). Ala2 carries the N-acetylalanine modification. Phosphoserine is present on Ser11. The span at 32–42 (GAAAAAAAAGA) shows a compositional bias: low complexity. Phosphoserine occurs at positions 76 and 78. The residue at position 85 (Tyr85) is a Phosphotyrosine. EF-hand domains lie at 94–129 (KQIK…LGAP) and 130–165 (QTHL…AAAG). The Ca(2+) site is built by Asp107, Asp111, Glu118, Asp143, Asp145, Asp147, Lys149, and Glu154. Lys235 bears the N6-acetyllysine mark.

Interacts with CASP9; with inactive form.

Its subcellular location is the membrane raft. May regulate B-cell receptor (BCR)-induced immature and primary B-cell apoptosis. Plays a role as negative regulator of the canonical NF-kappa-B-activating branch. Controls spontaneous apoptosis through the regulation of BCL2L1 abundance. The protein is EF-hand domain-containing protein D2 (EFHD2) of Bos taurus (Bovine).